The sequence spans 70 residues: NAD(P)H-quinone oxidoreductase subunit L (70 aa).

The next 2 helical transmembrane spans lie at 2 to 22 (IVALLYLILAGAYLLVIPIAV) and 39 to 59 (LLMYFLVFFFFPGLLVLSPFA).

The protein belongs to the complex I NdhL subunit family. NDH-1 can be composed of about 15 different subunits; different subcomplexes with different compositions have been identified which probably have different functions.

The protein localises to the cellular thylakoid membrane. It catalyses the reaction a plastoquinone + NADH + (n+1) H(+)(in) = a plastoquinol + NAD(+) + n H(+)(out). The enzyme catalyses a plastoquinone + NADPH + (n+1) H(+)(in) = a plastoquinol + NADP(+) + n H(+)(out). In terms of biological role, NDH-1 shuttles electrons from an unknown electron donor, via FMN and iron-sulfur (Fe-S) centers, to quinones in the respiratory and/or the photosynthetic chain. The immediate electron acceptor for the enzyme in this species is believed to be plastoquinone. Couples the redox reaction to proton translocation, and thus conserves the redox energy in a proton gradient. Cyanobacterial NDH-1 also plays a role in inorganic carbon-concentration. The sequence is that of NAD(P)H-quinone oxidoreductase subunit L from Nostoc punctiforme (strain ATCC 29133 / PCC 73102).